A 565-amino-acid chain; its full sequence is NAD-dependent malic enzyme (565 aa).

The Proton donor role is filled by tyrosine 104. Arginine 157 serves as a coordination point for NAD(+). Residue lysine 175 is the Proton acceptor of the active site. A divalent metal cation is bound by residues glutamate 246, aspartate 247, and aspartate 270. 2 residues coordinate NAD(+): aspartate 270 and asparagine 418.

It belongs to the malic enzymes family. Homotetramer. Mg(2+) serves as cofactor. Mn(2+) is required as a cofactor.

The enzyme catalyses (S)-malate + NAD(+) = pyruvate + CO2 + NADH. It carries out the reaction oxaloacetate + H(+) = pyruvate + CO2. This chain is NAD-dependent malic enzyme, found in Edwardsiella ictaluri (strain 93-146).